Consider the following 273-residue polypeptide: tRNA (guanine-N(7)-)-methyltransferase A (273 aa).

Residues G86, E109, R111, N142, A143, and L162 each coordinate S-adenosyl-L-methionine. D165 is a catalytic residue. An alphaC helix region spans residues 166–174 (PHFKKTKHK). S-adenosyl-L-methionine contacts are provided by T240 and E242. An alpha6 helix region spans residues 240 to 248 (TEEGKKVQR).

The protein belongs to the class I-like SAM-binding methyltransferase superfamily. TrmB family. Catalytic component of the METTL1-WDR4 complex, composed of mettl1 and wdr4.

It is found in the nucleus. The catalysed reaction is guanosine(46) in tRNA + S-adenosyl-L-methionine = N(7)-methylguanosine(46) in tRNA + S-adenosyl-L-homocysteine. The enzyme catalyses a guanosine in mRNA + S-adenosyl-L-methionine = an N(7)-methylguanosine in mRNA + S-adenosyl-L-homocysteine. It carries out the reaction a guanosine in miRNA + S-adenosyl-L-methionine = an N(7)-methylguanosine in miRNA + S-adenosyl-L-homocysteine. It participates in tRNA modification; N(7)-methylguanine-tRNA biosynthesis. In terms of biological role, catalytic component of METTL1-WDR4 methyltransferase complex that mediates the formation of N(7)-methylguanine in a subset of RNA species, such as tRNAs, mRNAs and microRNAs (miRNAs). Catalyzes the formation of N(7)-methylguanine at position 46 (m7G46) in a large subset of tRNAs that contain the 5'-RAGGU-3' motif within the variable loop. M7G46 interacts with C13-G22 in the D-loop to stabilize tRNA tertiary structure and protect tRNAs from decay. Also acts as a methyltransferase for a subset of internal N(7)-methylguanine in mRNAs. Internal N(7)-methylguanine methylation of mRNAs in response to stress promotes their relocalization to stress granules, thereby suppressing their translation. Also methylates a specific subset of miRNAs. In Xenopus tropicalis (Western clawed frog), this protein is tRNA (guanine-N(7)-)-methyltransferase A (mettl1-A).